Consider the following 464-residue polypeptide: MLYSKENKESYLEPVFGSSAEDRDIPKYTLAKEPLEPRIAYRLVKDELLDEGSARQNLATFCQTYMEDEATKLMSETLEKNAIDKSEYPRTAELENRCVNIIADLWHAPKDQKFMGTSTIGSSEACMLGGMAMKFAWRKRAEKLGLDIYAQKPNLVISSGYQVCWEKFCVYWDIDMRVVPMDKDHMQLNTDQVLDYVDEYTIGVVGILGITYTGRYDDIYALNEKLEEYNSKTDYKVYIHVDAASGGFFTPFVEPDIIWDFRLKNVISINTSGHKYGLVYPGIGWVLWKDESYLPEELIFKVSYLGGEMPTMQINFSRSASHIIGQYYNFLRYGFEGYRTIHQKTSDVAQYLAHAVEQTGYFDIYNDGSHLPIVCYKLKDDANVKWTLYDLADRLQMRGWQVPAYPLPKNLENIIIQRYVCRADLGFNMAEEFIQDFQASIQELNNAHILFHDTQQSGVHGFTH.

Lysine 275 is modified (N6-(pyridoxal phosphate)lysine).

This sequence belongs to the group II decarboxylase family. Pyridoxal 5'-phosphate serves as cofactor.

It catalyses the reaction L-glutamate + H(+) = 4-aminobutanoate + CO2. Its function is as follows. Converts internalized glutamate to GABA and increases the internal pH. Involved in glutamate-dependent acid resistance in gastric fluid. This chain is Glutamate decarboxylase beta (gadB), found in Listeria innocua serovar 6a (strain ATCC BAA-680 / CLIP 11262).